Reading from the N-terminus, the 79-residue chain is Small ribosomal subunit protein uS17 (79 aa).

The protein belongs to the universal ribosomal protein uS17 family. Part of the 30S ribosomal subunit.

One of the primary rRNA binding proteins, it binds specifically to the 5'-end of 16S ribosomal RNA. This Rhizobium rhizogenes (strain K84 / ATCC BAA-868) (Agrobacterium radiobacter) protein is Small ribosomal subunit protein uS17.